The sequence spans 177 residues: Acetyltransferase (177 aa).

In terms of domain architecture, N-acetyltransferase spans 4 to 174; sequence AQLRRVTAES…PTAIYFKTLG (171 aa). Acetyl-CoA contacts are provided by residues Glu-27, 96 to 98, 104 to 109, 130 to 131, and Tyr-141; these read LMV, GRGLGR, and DT.

In terms of biological role, renders tabtoxin-producing pathogens tolerant to their own phytotoxins. In Pseudomonas amygdali pv. tabaci (Pseudomonas syringae pv. tabaci), this protein is Acetyltransferase (ttr).